Consider the following 172-residue polypeptide: R-phycocyanin-2 beta chain (172 aa).

Asn-72 is subject to N4-methylasparagine. Cys-82 is a (2R,3E)-phycocyanobilin binding site. (2R,3E)-phycoerythrobilin is bound at residue Cys-153.

It belongs to the phycobiliprotein family. In terms of assembly, heterodimer of an alpha and a beta chain. Post-translationally, contains two covalently linked bilin chromophores.

The protein resides in the cellular thylakoid membrane. Functionally, light-harvesting photosynthetic bile pigment-protein from the phycobiliprotein complex. This chain is R-phycocyanin-2 beta chain (rpcB), found in Synechococcus sp. (strain WH8020).